Here is a 180-residue protein sequence, read N- to C-terminus: Acireductone dioxygenase (180 aa).

His97, His99, Glu103, and His141 together coordinate Fe(2+). His97, His99, Glu103, and His141 together coordinate Ni(2+).

Belongs to the acireductone dioxygenase (ARD) family. As to quaternary structure, monomer. The cofactor is Fe(2+). It depends on Ni(2+) as a cofactor.

It catalyses the reaction 1,2-dihydroxy-5-(methylsulfanyl)pent-1-en-3-one + O2 = 3-(methylsulfanyl)propanoate + CO + formate + 2 H(+). The enzyme catalyses 1,2-dihydroxy-5-(methylsulfanyl)pent-1-en-3-one + O2 = 4-methylsulfanyl-2-oxobutanoate + formate + 2 H(+). It participates in amino-acid biosynthesis; L-methionine biosynthesis via salvage pathway; L-methionine from S-methyl-5-thio-alpha-D-ribose 1-phosphate: step 5/6. Catalyzes 2 different reactions between oxygen and the acireductone 1,2-dihydroxy-3-keto-5-methylthiopentene (DHK-MTPene) depending upon the metal bound in the active site. Fe-containing acireductone dioxygenase (Fe-ARD) produces formate and 2-keto-4-methylthiobutyrate (KMTB), the alpha-ketoacid precursor of methionine in the methionine recycle pathway. Ni-containing acireductone dioxygenase (Ni-ARD) produces methylthiopropionate, carbon monoxide and formate, and does not lie on the methionine recycle pathway. The chain is Acireductone dioxygenase from Cronobacter sakazakii (strain ATCC BAA-894) (Enterobacter sakazakii).